A 367-amino-acid chain; its full sequence is Polyenoic acids biosynthesis gene cluster protein Ba17b (367 aa).

A run of 3 helical transmembrane segments spans residues 16 to 36 (LEVFIAVFTPLTIIAVALRFY), 50 to 70 (WLIIAALVGQIVAGGIAIGAV), and 90 to 110 (LVAFFKYLVAMSTWYATTEGL). Asn-133 is a glycosylation site (N-linked (GlcNAc...) asparagine). 3 helical membrane-spanning segments follow: residues 137–157 (LVLVGASVGGGLADLFGCTPF), 183–203 (FPNIVTDVVLLVLPMPIVWGL), and 211–231 (LVLVLTFLFGSIFGELIGGDS). The N-linked (GlcNAc...) asparagine glycan is linked to Asn-245. A helical transmembrane segment spans residues 259-279 (LIIWTVCEPGVYLIAACLLVY).

It belongs to the SAT4 family.

It is found in the membrane. Its pathway is secondary metabolite biosynthesis. Part of the gene cluster that mediates the biosynthesis of (2Z,4E,6E,10E)-9-hydroxydodeca-2,4,6,10-tetraenoic acid (BAA), (2E,4E,6E,10E)-9-hydroxydodeca-2,4,6,10-tetraenoic acid (BAB), and (2Z,4E,6E)-octa-2,4,6-trienedioic acid (PBA). The highly reducing polyketide synthase Ba17a is sufficent to produce PBA and BAA. The still to be characterized protein Ba17b leads to an increased production of BAA as well as to the production of the new compound BAB. BAA does not possess insecticidal activity against G.mellonella larvae, however, both BAA and BAB increase the growth of Candida albicans and BAA can mitigate the fungicidal effects of fluconazole over C.albicans, suggesting that generalist pathogens such as M.anisopliae, can potentially manipulate the yeast microbiota found in arthropods (and anywhere else) by the activity of compounds as BAA and BAB. This is Polyenoic acids biosynthesis gene cluster protein Ba17b from Metarhizium anisopliae (Entomophthora anisopliae).